An 89-amino-acid polypeptide reads, in one-letter code: Large ribosomal subunit protein bL31B (89 aa).

This sequence belongs to the bacterial ribosomal protein bL31 family. Type B subfamily. Part of the 50S ribosomal subunit.

This Actinobacillus pleuropneumoniae serotype 5b (strain L20) protein is Large ribosomal subunit protein bL31B.